Consider the following 726-residue polypeptide: Catalase-peroxidase (726 aa).

A disordered region spans residues 1–34; sequence MSMSDDTHNSLSTGKCPFHQGSHDRSAGAGTSSH. Residues 105-226 constitute a cross-link (tryptophyl-tyrosyl-methioninium (Trp-Tyr) (with M-252)); sequence WHGAGTYRSV…LGATEMGLIY (122 aa). His-106 acts as the Proton acceptor in catalysis. Positions 226–252 form a cross-link, tryptophyl-tyrosyl-methioninium (Tyr-Met) (with W-105); the sequence is YVNPEGPDHSGEPLSAAAAIRATFGNM. Residue His-267 participates in heme b binding.

This sequence belongs to the peroxidase family. Peroxidase/catalase subfamily. In terms of assembly, homodimer or homotetramer. The cofactor is heme b. Formation of the three residue Trp-Tyr-Met cross-link is important for the catalase, but not the peroxidase activity of the enzyme.

The enzyme catalyses H2O2 + AH2 = A + 2 H2O. The catalysed reaction is 2 H2O2 = O2 + 2 H2O. In terms of biological role, bifunctional enzyme with both catalase and broad-spectrum peroxidase activity. In Citrobacter koseri (strain ATCC BAA-895 / CDC 4225-83 / SGSC4696), this protein is Catalase-peroxidase.